The following is a 259-amino-acid chain: Thiazole synthase (259 aa).

K95 functions as the Schiff-base intermediate with DXP in the catalytic mechanism. 1-deoxy-D-xylulose 5-phosphate contacts are provided by residues G156, 183–184 (AG), and 205–206 (NS).

Belongs to the ThiG family. As to quaternary structure, homotetramer. Forms heterodimers with either ThiH or ThiS.

The protein resides in the cytoplasm. The catalysed reaction is [ThiS sulfur-carrier protein]-C-terminal-Gly-aminoethanethioate + 2-iminoacetate + 1-deoxy-D-xylulose 5-phosphate = [ThiS sulfur-carrier protein]-C-terminal Gly-Gly + 2-[(2R,5Z)-2-carboxy-4-methylthiazol-5(2H)-ylidene]ethyl phosphate + 2 H2O + H(+). It functions in the pathway cofactor biosynthesis; thiamine diphosphate biosynthesis. In terms of biological role, catalyzes the rearrangement of 1-deoxy-D-xylulose 5-phosphate (DXP) to produce the thiazole phosphate moiety of thiamine. Sulfur is provided by the thiocarboxylate moiety of the carrier protein ThiS. In vitro, sulfur can be provided by H(2)S. In Coxiella burnetii (strain CbuK_Q154) (Coxiella burnetii (strain Q154)), this protein is Thiazole synthase.